The sequence spans 430 residues: Histidine--tRNA ligase (430 aa).

The protein belongs to the class-II aminoacyl-tRNA synthetase family. As to quaternary structure, homodimer.

The protein localises to the cytoplasm. The catalysed reaction is tRNA(His) + L-histidine + ATP = L-histidyl-tRNA(His) + AMP + diphosphate + H(+). In Chlamydia pneumoniae (Chlamydophila pneumoniae), this protein is Histidine--tRNA ligase (hisS).